A 393-amino-acid chain; its full sequence is G protein-activated inward rectifier potassium channel 3 (393 aa).

Positions 1–23 (MAQENAAFSPGSEEPPRRRGRQR) are disordered. The Cytoplasmic segment spans residues 1 to 57 (MAQENAAFSPGSEEPPRRRGRQRYVEKDGRCNVQQGNVRETYRYLTDLFTTLVDLQW). Residues 58 to 82 (RLSLLFFVLAYALTWLFFGAIWWLI) traverse the membrane as a helical segment. Residues 83 to 106 (AYGRGDLEHLEDTAWTPCVNNLNG) are Extracellular-facing. Residues 107-118 (FVAAFLFSIETE) constitute an intramembrane region (helical; Pore-forming). An intramembrane region (pore-forming) is located at residues 119–125 (TTIGYGH). Residues 120 to 125 (TIGYGH) carry the Selectivity filter motif. Over 126 to 134 (RVITDQCPE) the chain is Extracellular. A helical transmembrane segment spans residues 135–156 (GIVLLLLQAILGSMVNAFMVGC). Residues 157 to 393 (MFVKISQPNK…LPPPESESKV (237 aa)) lie on the Cytoplasmic side of the membrane. The tract at residues 360–393 (KVEEEGAGEGAGAGDGADKEQNGCLPPPESESKV) is disordered. Pro residues predominate over residues 384-393 (LPPPESESKV). A PDZ-binding motif is present at residues 390–393 (ESKV).

This sequence belongs to the inward rectifier-type potassium channel (TC 1.A.2.1) family. KCNJ9 subfamily. As to quaternary structure, associates with KCNJ3/GIRK1 to form a G-protein-activated heteromultimer pore-forming unit. Interacts (via PDZ-binding motif) with SNX27 (via PDZ domain); the interaction is required when endocytosed to prevent degradation in lysosomes and promote recycling to the plasma membrane.

It is found in the membrane. It carries out the reaction K(+)(in) = K(+)(out). Functionally, this receptor is controlled by G proteins. Inward rectifier potassium channels are characterized by a greater tendency to allow potassium to flow into the cell rather than out of it. Their voltage dependence is regulated by the concentration of extracellular potassium; as external potassium is raised, the voltage range of the channel opening shifts to more positive voltages. The inward rectification is mainly due to the blockage of outward current by internal magnesium. Unable to produce channel activity when expressed alone but forms a functional channel in association with KCNJ3/GIRK1. In Rattus norvegicus (Rat), this protein is G protein-activated inward rectifier potassium channel 3 (Kcnj9).